The following is a 445-amino-acid chain: F-box protein At5g10340 (445 aa).

The F-box domain occupies 64 to 112 (SMEELLPHDVIEYHIMVRLDVKTLLKFKSVSKQWMSTIQSPSFQERQLI).

In Arabidopsis thaliana (Mouse-ear cress), this protein is F-box protein At5g10340.